Here is a 351-residue protein sequence, read N- to C-terminus: Keratocan (351 aa).

A signal peptide spans 1-20 (MATPNCLILWVLLIADTVWT). The 39-residue stretch at 34–72 (DWDVHDDFYCPRECFCPPSFPTALYCENRGLTEIPPIPS) folds into the LRRNT domain. 2 disulfide bridges follow: C43–C49 and C47–C59. LRR repeat units lie at residues 73-94 (RIWYLYLENNLIESIPEKPFEN), 97-118 (QLRWINLNKNKITNYGIEKGAL), 123-143 (KLLFLFLEDNELEEVPSPLPR), 144-165 (SLEQLQLARNKVSRIPQGTFSN), 168-181 (NLTLLDLQHNKLLD), 194-214 (NLMQLNMAKNALRNMPPRLPA), 215-236 (NTMQLFLDNNSIEGIPENYFNV), 239-259 (KVAFLRLNHNKLSDAGLPSRG), 264-283 (SILDLQLSYNQLTNFPRINA), and 284-305 (NLQHLHLDHNKIKNVNMSVICP). An N-linked (GlcNAc...) (keratan sulfate) asparagine glycan is attached at N94. A glycan (N-linked (GlcNAc...) (keratan sulfate) asparagine) is linked at N168. Residue N223 is glycosylated (N-linked (GlcNAc...) asparagine). N299 carries an N-linked (GlcNAc...) asparagine glycan. Cysteines 304 and 342 form a disulfide.

Belongs to the small leucine-rich proteoglycan (SLRP) family. SLRP class II subfamily. Post-translationally, binds keratan sulfate chains. As to expression, selectively expressed in cornea of adult where it is detected in keratocytes but not in scleral cells. In embryo, first detected in periocular mesenchymal cells migrating toward developing cornea on 13.5 dpc; expression gradually restricted to corneal stromal cells on 14.5 to 18.5 dpc. Detected in scleral cells of 15.5 dpc but not in 18.5 dpc embryos.

The protein localises to the secreted. The protein resides in the extracellular space. Its subcellular location is the extracellular matrix. Functionally, may be important in developing and maintaining corneal transparency and for the structure of the stromal matrix. This Mus musculus (Mouse) protein is Keratocan (Kera).